The following is a 322-amino-acid chain: Exosome complex component RRP4 homolog (322 aa).

The region spanning 94–172 is the S1 motif domain; it reads GDIVVGRVIE…HDGSLQLQAR (79 aa). The 56-residue stretch at 182 to 237 folds into the KH domain; that stretch reads GQLLKVDPYLVKRSKHHFHYVESLGIDLIIGCNGFIWVGEHVEVRDPMAIDDQKDE.

The protein belongs to the RRP4 family. In terms of assembly, component of the RNA exosome complex. Interacts with RPP41. As to expression, expressed in roots, stems, rosette and cauline leaves, flowers and siliques.

The protein resides in the cytoplasm. It localises to the nucleus. It is found in the nucleolus. In terms of biological role, non-catalytic component of the RNA exosome complex which has 3'-&gt;5' exoribonuclease activity and participates in a multitude of cellular RNA processing, maturation and degradation events. In vitro, is an active and distributive 3'-&gt;5' exonuclease requiring a free 3'-OH on the substrate and releasing nucleoside 5'-monophosphates. Required for normal embryo development. The chain is Exosome complex component RRP4 homolog from Arabidopsis thaliana (Mouse-ear cress).